Reading from the N-terminus, the 120-residue chain is MPVYVDYETPADLAERSLEALEVARDTGTVKKGTNETTKAVERGNADLVIVAEDVSPEEIVMHLPELAEEKGIPVVFVDTQDEVGHAAGLEVGSAAAAVIDAGDADDDVEDIGEKVAELR.

It belongs to the eukaryotic ribosomal protein eL8 family. In terms of assembly, part of the 50S ribosomal subunit. Probably part of the RNase P complex.

The protein localises to the cytoplasm. Functionally, multifunctional RNA-binding protein that recognizes the K-turn motif in ribosomal RNA, the RNA component of RNase P, box H/ACA, box C/D and box C'/D' sRNAs. The polypeptide is Large ribosomal subunit protein eL8 (Halorubrum lacusprofundi (strain ATCC 49239 / DSM 5036 / JCM 8891 / ACAM 34)).